The primary structure comprises 279 residues: Cholesterol 25-hydroxylase-like protein 2 (279 aa).

2 N-linked (GlcNAc...) asparagine glycosylation sites follow: Asn6 and Asn13. Transmembrane regions follow at residues 36-56, 86-106, and 120-140; these read LFPVILSVSMYLVLVFFYTVL, LALTTYNHLLYIFPAAVAQWL, and LTAFLLGIVGCTVVFDFQYYL. The region spanning 128 to 262 is the Fatty acid hydroxylase domain; that stretch reads VGCTVVFDFQ…FAHWDWLGGT (135 aa). Residues 141 to 145 carry the Histidine box-1 motif; that stretch reads WHLLH. Positions 156 to 160 match the Histidine box-2 motif; it reads HALHH. A run of 2 transmembrane segments spans residues 165–185 and 189–209; these read TFSLVTQYLSAWELFSVGFWT and PLLLQCHCLTAWAFMLFNIWV. A Histidine box-3 motif is present at residues 237 to 243; it reads RHDAHHQ.

Belongs to the sterol desaturase family. Requires Fe cation as cofactor.

Its subcellular location is the endoplasmic reticulum membrane. Its function is as follows. May catalyze the formation of 25-hydroxycholesterol from cholesterol. The sequence is that of Cholesterol 25-hydroxylase-like protein 2 from Danio rerio (Zebrafish).